The sequence spans 180 residues: Large ribosomal subunit protein uL6 (180 aa).

It belongs to the universal ribosomal protein uL6 family. Part of the 50S ribosomal subunit.

In terms of biological role, this protein binds to the 23S rRNA, and is important in its secondary structure. It is located near the subunit interface in the base of the L7/L12 stalk, and near the tRNA binding site of the peptidyltransferase center. This chain is Large ribosomal subunit protein uL6, found in Thermoanaerobacter sp. (strain X514).